We begin with the raw amino-acid sequence, 777 residues long: Reticulon-1 (777 aa).

Disordered regions lie at residues 1 to 77 (MAAP…ETAS), 129 to 182 (NGHI…ILAD), 198 to 245 (TRPQ…PVEG), and 293 to 573 (ATHE…IPGP). Phosphoserine occurs at positions 13 and 68. Over residues 199–233 (RPQEAKGQEEQSPGLEDKDLDFKDKDSEVSTKPEG) the composition is skewed to basic and acidic residues. Phosphoserine occurs at positions 210, 241, and 325. The segment covering 326-339 (PGSVTPPSSGTEPS) has biased composition (low complexity). A phosphoserine mark is found at S348 and S350. Polar residues predominate over residues 393–406 (IPSSLDQEASSAES). S485 bears the Phosphoserine mark. A compositionally biased stretch (basic and acidic residues) spans 495-510 (AIREETSSRATEERAP). Polar residues predominate over residues 525–534 (TPVTLQSRPE). Residues 590-777 (AIDLLYWRDI…KIPGAKRHAE (188 aa)) enclose the Reticulon domain. The next 2 membrane-spanning stretches (helical) occupy residues 604–624 (IVFG…VVSV) and 706–726 (FAVL…LTLL).

As to quaternary structure, interacts with NDRG1. Interacts with BACE1. Interacts with TMEM33. Interacts with UGCG; regulates the ceramide glucosyltransferase activity of UGCG. Expressed predominantly in central and peripheral nervous system of newborn and adult rats. Low levels have been also detected in heart, adrenal gland and spleen. Expression of isoform RTN1-B is restricted to particular neuronal types.

Its subcellular location is the endoplasmic reticulum membrane. It is found in the golgi apparatus membrane. Functionally, inhibits amyloid precursor protein processing, probably by blocking BACE1 activity. This Rattus norvegicus (Rat) protein is Reticulon-1 (Rtn1).